A 282-amino-acid chain; its full sequence is GDT1-like protein 4 (282 aa).

The signal sequence occupies residues 1–26 (MARRVSTTRLLLLLLLVAAAAAAAAA). 6 helical membrane passes run 67–87 (AGLGLFDAFFASLSMILVSEI), 106–126 (TVLSGALSALVVMTILSTGLG), 138–158 (TNSAATVLYAFFGLRLLYIAW), 189–209 (IFSRFCTPIFLESFVLTFLAE), 227–247 (AVGVAVGATLGHTICTSFAVV), and 259–279 (GTVATIGGLLFLGFSLSSYFY).

The protein belongs to the GDT1 family.

It localises to the membrane. In Oryza sativa subsp. japonica (Rice), this protein is GDT1-like protein 4.